The following is a 199-amino-acid chain: RNA-binding protein, mRNA-processing factor 2a (199 aa).

One can recognise an RRM domain in the interval 20 to 97 (RTLFVSGLPV…QTLRLEFAKA (78 aa)).

As to quaternary structure, interacts with Bucky ball (BUC); to mediate Balbiani body formation and oocyte polarity during early oogenesis.

The protein resides in the cytoplasm. It localises to the nucleus. The protein localises to the stress granule. Functionally, RNA-binding protein involved in the regulation of smooth muscle cell differentiation and proliferation in the gastrointestinal system. RNA-binding protein localized in Balbiani body (electron-dense aggregates in the oocyte) and germ plasm during oogenesis, and may be required to maintain germ plasm mRNA translational repression. Translational regulator during topographic map formation in the visual system. Establishes oocyte polarity through interaction with Bucky ball (BUC). Acts as a pre-mRNA alternative splicing regulator. Mediates ACTN1 and FLNB alternative splicing. Likely binds to mRNA tandem CAC trinucleotide or CA dinucleotide motifs. The sequence is that of RNA-binding protein, mRNA-processing factor 2a from Danio rerio (Zebrafish).